The chain runs to 147 residues: Hemoglobin subunit gamma-1 (147 aa).

N-acetylglycine is present on G2. Positions 3-147 constitute a Globin domain; it reads HFTEEDKATI…VASALSSRYH (145 aa). T13 is subject to Phosphothreonine. Phosphoserine is present on residues S45, S51, and S53. At K60 the chain carries N6-acetyllysine. H64 is a binding site for heme b. K83 is modified (N6-acetyllysine). Heme b is bound at residue H93. C94 carries the S-nitrosocysteine modification. Phosphoserine is present on S140.

It belongs to the globin family. As to quaternary structure, heterotetramer of two alpha chains and two gamma chains in fetal hemoglobin (Hb F). As to expression, red blood cells.

Functionally, gamma chains make up the fetal hemoglobin F, in combination with alpha chains. The sequence is that of Hemoglobin subunit gamma-1 (HBG1) from Pongo pygmaeus (Bornean orangutan).